The chain runs to 934 residues: Protein translocase subunit SecA (934 aa).

ATP-binding positions include Q87, 105-109, and D515; that span reads GEGKT. Residues C918, C920, C929, and H930 each coordinate Zn(2+).

Belongs to the SecA family. As to quaternary structure, monomer and homodimer. Part of the essential Sec protein translocation apparatus which comprises SecA, SecYEG and auxiliary proteins SecDF-YajC and YidC. It depends on Zn(2+) as a cofactor.

The protein localises to the cell inner membrane. The protein resides in the cytoplasm. It carries out the reaction ATP + H2O + cellular proteinSide 1 = ADP + phosphate + cellular proteinSide 2.. Its function is as follows. Part of the Sec protein translocase complex. Interacts with the SecYEG preprotein conducting channel. Has a central role in coupling the hydrolysis of ATP to the transfer of proteins into and across the cell membrane, serving both as a receptor for the preprotein-SecB complex and as an ATP-driven molecular motor driving the stepwise translocation of polypeptide chains across the membrane. The protein is Protein translocase subunit SecA of Ralstonia nicotianae (strain ATCC BAA-1114 / GMI1000) (Ralstonia solanacearum).